A 377-amino-acid chain; its full sequence is Peptidyl-prolyl cis-trans isomerase D (377 aa).

The region spanning 11–178 (YFDIQIGSQK…TDVTIVDCGE (168 aa)) is the PPIase cyclophilin-type domain. TPR repeat units follow at residues 220-253 (ASELKNFGNTAFKSGDVALGLDKYQKGLRYLNEF), 273-306 (FTLHSNSSLLANKLGQYKNAQNWATYALEVADAA), and 314-347 (AKAYYRRAVAYSGQKEEDEALKDLQEALKLAPGD).

It belongs to the cyclophilin-type PPIase family. PPIase D subfamily.

It localises to the cytoplasm. The catalysed reaction is [protein]-peptidylproline (omega=180) = [protein]-peptidylproline (omega=0). Functionally, PPIases accelerate the folding of proteins. It catalyzes the cis-trans isomerization of proline imidic peptide bonds in oligopeptides. The chain is Peptidyl-prolyl cis-trans isomerase D (cpr6) from Aspergillus fumigatus (strain ATCC MYA-4609 / CBS 101355 / FGSC A1100 / Af293) (Neosartorya fumigata).